We begin with the raw amino-acid sequence, 927 residues long: Isoleucine--tRNA ligase (927 aa).

The short motif at proline 57–histidine 67 is the 'HIGH' region element. Glutamate 553 is an L-isoleucyl-5'-AMP binding site. The short motif at lysine 594 to serine 598 is the 'KMSKS' region element. Lysine 597 serves as a coordination point for ATP. 4 residues coordinate Zn(2+): cysteine 886, cysteine 889, cysteine 906, and cysteine 909.

The protein belongs to the class-I aminoacyl-tRNA synthetase family. IleS type 1 subfamily. In terms of assembly, monomer. It depends on Zn(2+) as a cofactor.

The protein localises to the cytoplasm. The catalysed reaction is tRNA(Ile) + L-isoleucine + ATP = L-isoleucyl-tRNA(Ile) + AMP + diphosphate. In terms of biological role, catalyzes the attachment of isoleucine to tRNA(Ile). As IleRS can inadvertently accommodate and process structurally similar amino acids such as valine, to avoid such errors it has two additional distinct tRNA(Ile)-dependent editing activities. One activity is designated as 'pretransfer' editing and involves the hydrolysis of activated Val-AMP. The other activity is designated 'posttransfer' editing and involves deacylation of mischarged Val-tRNA(Ile). This Lactobacillus helveticus (strain DPC 4571) protein is Isoleucine--tRNA ligase.